A 282-amino-acid polypeptide reads, in one-letter code: E3 ubiquitin-protein ligase RNF217 (282 aa).

Positions 1 to 218 (MSCRVCLEDR…LSIFGCKYRY (218 aa)) are TRIAD supradomain. The Zn(2+) site is built by Cys3, Cys6, Cys23, Cys26, Cys123, Cys126, His131, Cys136, Cys163, and Cys166. The segment at 3-49 (CRVCLEDRSIKPLPCCKKPVCDECLKRYLSSQVQLGQAEIQCPITEC) adopts an RING-type 1 zinc-finger fold. The IBR-type zinc-finger motif lies at 68–136 (IKYKYFLELS…HAPWHEGVNC (69 aa)). The RING-type 2; atypical zinc finger occupies 163 to 192 (CPRCKVHIQRTEGCDHMTCSQCNTNFCYRC). Cys176 is a catalytic residue. Residues Cys181, Cys184, Cys189, Cys192, His205, and Cys214 each coordinate Zn(2+). A helical transmembrane segment spans residues 243-263 (LLIVLGLVLGALAVVIGLFGL).

This sequence belongs to the RBR family. RNF217 subfamily.

The protein resides in the cytoplasm. Its subcellular location is the membrane. The catalysed reaction is [E2 ubiquitin-conjugating enzyme]-S-ubiquitinyl-L-cysteine + [acceptor protein]-L-lysine = [E2 ubiquitin-conjugating enzyme]-L-cysteine + [acceptor protein]-N(6)-ubiquitinyl-L-lysine.. The protein operates within protein modification; protein ubiquitination. In terms of biological role, E3 ubiquitin-protein ligase which accepts ubiquitin from E2 ubiquitin-conjugating enzymes in the form of a thioester and then directly transfers the ubiquitin to targeted substrates. Mediates the degradation of the iron exporter ferroportin/SLC40A1 and thus regulates iron homeostasis. This Xenopus laevis (African clawed frog) protein is E3 ubiquitin-protein ligase RNF217 (rnf217).